Here is a 585-residue protein sequence, read N- to C-terminus: PiggyBac transposable element-derived protein 4 (585 aa).

The interval 1 to 73 is disordered; sequence MSNPRKRSIP…STSSDSGRSM (73 aa). The span at 25-40 shows a compositional bias: acidic residues; that stretch reads DSFDESDFSEIDDSDN. The span at 47-61 shows a compositional bias: basic and acidic residues; it reads EADKIRPLSHLESDG. Residues 62-72 show a composition bias toward low complexity; that stretch reads KSSTSSDSGRS.

The chain is PiggyBac transposable element-derived protein 4 (PGBD4) from Homo sapiens (Human).